A 256-amino-acid polypeptide reads, in one-letter code: Beta-fibrinogenase-like (256 aa).

A signal peptide spans 1-18 (MVLIKVLANLLVLQLSYA). A propeptide spanning residues 19-24 (QKSSEL) is cleaved from the precursor. Residues 25-247 (VVGGDECNIN…YTDWIQSIIA (223 aa)) enclose the Peptidase S1 domain. Cystine bridges form between Cys-31-Cys-161, Cys-49-Cys-65, Cys-96-Cys-254, Cys-140-Cys-208, Cys-172-Cys-187, and Cys-198-Cys-223. An N-linked (GlcNAc...) asparagine glycan is attached at Asn-44. The Charge relay system role is filled by His-64. N-linked (GlcNAc...) asparagine glycosylation is found at Asn-78 and Asn-101. Catalysis depends on Asp-108, which acts as the Charge relay system. An N-linked (GlcNAc...) asparagine glycan is attached at Asn-152. The active-site Charge relay system is the Ser-202.

This sequence belongs to the peptidase S1 family. Snake venom subfamily. Monomer. As to expression, expressed by the venom gland.

It is found in the secreted. Functionally, snake venom serine protease that has fibrinogenolytic activities by hydrolyzing the beta chain of fibrinogen (FGB). Typical arginine esterase which hydrolyzes esters and amides of arginine. The chain is Beta-fibrinogenase-like from Daboia siamensis (Eastern Russel's viper).